The sequence spans 170 residues: ATP synthase subunit b (170 aa).

Residues 25–45 traverse the membrane as a helical segment; the sequence is LIPNGTFFAVLIIFLIVLGVI. The segment at 121-147 is disordered; it reads EVAQTLTQADQQLSAQGDQVRSGLESS. Positions 122-139 are enriched in polar residues; it reads VAQTLTQADQQLSAQGDQ.

The protein belongs to the ATPase B chain family. F-type ATPases have 2 components, F(1) - the catalytic core - and F(0) - the membrane proton channel. F(1) has five subunits: alpha(3), beta(3), gamma(1), delta(1), epsilon(1). F(0) has three main subunits: a(1), b(2) and c(10-14). The alpha and beta chains form an alternating ring which encloses part of the gamma chain. F(1) is attached to F(0) by a central stalk formed by the gamma and epsilon chains, while a peripheral stalk is formed by the delta and b chains.

It localises to the cell membrane. Functionally, f(1)F(0) ATP synthase produces ATP from ADP in the presence of a proton or sodium gradient. F-type ATPases consist of two structural domains, F(1) containing the extramembraneous catalytic core and F(0) containing the membrane proton channel, linked together by a central stalk and a peripheral stalk. During catalysis, ATP synthesis in the catalytic domain of F(1) is coupled via a rotary mechanism of the central stalk subunits to proton translocation. Its function is as follows. Component of the F(0) channel, it forms part of the peripheral stalk, linking F(1) to F(0). This chain is ATP synthase subunit b, found in Mycolicibacterium smegmatis (strain ATCC 700084 / mc(2)155) (Mycobacterium smegmatis).